We begin with the raw amino-acid sequence, 225 residues long: Ribosomal RNA large subunit methyltransferase E (225 aa).

S-adenosyl-L-methionine-binding residues include Gly64, Trp66, Asp93, Asp109, and Asp138. The active-site Proton acceptor is Lys178.

This sequence belongs to the class I-like SAM-binding methyltransferase superfamily. RNA methyltransferase RlmE family.

It is found in the cytoplasm. It carries out the reaction uridine(2552) in 23S rRNA + S-adenosyl-L-methionine = 2'-O-methyluridine(2552) in 23S rRNA + S-adenosyl-L-homocysteine + H(+). Functionally, specifically methylates the uridine in position 2552 of 23S rRNA at the 2'-O position of the ribose in the fully assembled 50S ribosomal subunit. The protein is Ribosomal RNA large subunit methyltransferase E of Cupriavidus pinatubonensis (strain JMP 134 / LMG 1197) (Cupriavidus necator (strain JMP 134)).